Here is a 197-residue protein sequence, read N- to C-terminus: Imidazoleglycerol-phosphate dehydratase (197 aa).

Belongs to the imidazoleglycerol-phosphate dehydratase family.

Its subcellular location is the cytoplasm. It catalyses the reaction D-erythro-1-(imidazol-4-yl)glycerol 3-phosphate = 3-(imidazol-4-yl)-2-oxopropyl phosphate + H2O. It functions in the pathway amino-acid biosynthesis; L-histidine biosynthesis; L-histidine from 5-phospho-alpha-D-ribose 1-diphosphate: step 6/9. This is Imidazoleglycerol-phosphate dehydratase from Xanthobacter autotrophicus (strain ATCC BAA-1158 / Py2).